Here is a 421-residue protein sequence, read N- to C-terminus: Flap endonuclease 1 (421 aa).

An N-domain region spans residues 1-109; that stretch reads MGIKGLAKLL…HELIKRREKR (109 aa). Aspartate 34 provides a ligand contact to Mg(2+). 2 residues coordinate DNA: arginine 47 and arginine 75. 5 residues coordinate Mg(2+): aspartate 91, glutamate 163, glutamate 165, aspartate 184, and aspartate 186. An I-domain region spans residues 127–258; the sequence is EQDKQSKRLV…KTALKLIREH (132 aa). DNA is bound at residue glutamate 163. DNA contacts are provided by glycine 236 and aspartate 238. Position 238 (aspartate 238) interacts with Mg(2+). The tract at residues 284-307 is disordered; it reads KKLDAQSDDDDEEGVESPSKEENN. Residues 289 to 298 show a composition bias toward acidic residues; the sequence is QSDDDDEEGV. An interaction with PCNA region spans residues 379–387; that stretch reads PQTRMDSFF. The tract at residues 398 to 421 is disordered; the sequence is SAAKRKADAAKAKAAVSKKKTKKH.

It belongs to the XPG/RAD2 endonuclease family. FEN1 subfamily. In terms of assembly, interacts with PCNA. Three molecules of FEN1 bind to one PCNA trimer with each molecule binding to one PCNA monomer. PCNA stimulates the nuclease activity without altering cleavage specificity. The cofactor is Mg(2+). In terms of processing, phosphorylated. Phosphorylation upon DNA damage induces relocalization to the nuclear plasma.

It is found in the nucleus. It localises to the nucleolus. The protein localises to the nucleoplasm. Its subcellular location is the mitochondrion. Functionally, structure-specific nuclease with 5'-flap endonuclease and 5'-3' exonuclease activities involved in DNA replication and repair. During DNA replication, cleaves the 5'-overhanging flap structure that is generated by displacement synthesis when DNA polymerase encounters the 5'-end of a downstream Okazaki fragment. It enters the flap from the 5'-end and then tracks to cleave the flap base, leaving a nick for ligation. Also involved in the long patch base excision repair (LP-BER) pathway, by cleaving within the apurinic/apyrimidinic (AP) site-terminated flap. Acts as a genome stabilization factor that prevents flaps from equilibrating into structures that lead to duplications and deletions. Also possesses 5'-3' exonuclease activity on nicked or gapped double-stranded DNA, and exhibits RNase H activity. Also involved in replication and repair of rDNA and in repairing mitochondrial DNA. This is Flap endonuclease 1 from Phaeodactylum tricornutum (strain CCAP 1055/1).